A 333-amino-acid chain; its full sequence is UPF0284 protein TGAM_0534 (333 aa).

The protein belongs to the UPF0284 family.

The polypeptide is UPF0284 protein TGAM_0534 (Thermococcus gammatolerans (strain DSM 15229 / JCM 11827 / EJ3)).